We begin with the raw amino-acid sequence, 93 residues long: Small ribosomal subunit protein mS33 (93 aa).

It belongs to the mitochondrion-specific ribosomal protein mS33 family. Component of the mitochondrial small ribosomal subunit (mt-SSU). Mature yeast 74S mitochondrial ribosomes consist of a small (37S) and a large (54S) subunit. The 37S small subunit contains a 15S ribosomal RNA (15S mt-rRNA) and at least 32 different proteins. The 54S large subunit contains a 21S rRNA (21S mt-rRNA) and at least 45 different proteins.

The protein localises to the mitochondrion. Component of the mitochondrial ribosome (mitoribosome), a dedicated translation machinery responsible for the synthesis of mitochondrial genome-encoded proteins, including at least some of the essential transmembrane subunits of the mitochondrial respiratory chain. The mitoribosomes are attached to the mitochondrial inner membrane and translation products are cotranslationally integrated into the membrane. The chain is Small ribosomal subunit protein mS33 (rsm27) from Schizosaccharomyces pombe (strain 972 / ATCC 24843) (Fission yeast).